Reading from the N-terminus, the 1077-residue chain is Carbamoyl phosphate synthase large chain (1077 aa).

Positions 1–403 (MPKRTDIQSI…SLHKALRGLE (403 aa)) are carboxyphosphate synthetic domain. Residues R129, R169, G175, G176, E208, L210, E215, G241, I242, H243, Q285, and E299 each coordinate ATP. Residues 133–328 (DKAMKSIGLE…IAKIAAKLAV (196 aa)) enclose the ATP-grasp 1 domain. Residues Q285, E299, and N301 each contribute to the Mg(2+) site. Residues Q285, E299, and N301 each coordinate Mn(2+). The oligomerization domain stretch occupies residues 404-553 (VGATGFDEMV…YSSYDDECEA (150 aa)). The segment at 554-935 (NPTDKEKIMV…AYAKAELGCG (382 aa)) is carbamoyl phosphate synthetic domain. Positions 678 to 869 (QQAVDRLGLL…LAKIAARVMA (192 aa)) constitute an ATP-grasp 2 domain. Residues R714, R753, L755, E760, G785, V786, H787, S788, Q828, and E840 each contribute to the ATP site. Mg(2+) is bound by residues Q828, E840, and N842. Q828, E840, and N842 together coordinate Mn(2+). Residues 936–1077 (NVYPEGGRAL…HAQVQASLKA (142 aa)) form the MGS-like domain. The segment at 936–1077 (NVYPEGGRAL…HAQVQASLKA (142 aa)) is allosteric domain.

Belongs to the CarB family. In terms of assembly, composed of two chains; the small (or glutamine) chain promotes the hydrolysis of glutamine to ammonia, which is used by the large (or ammonia) chain to synthesize carbamoyl phosphate. Tetramer of heterodimers (alpha,beta)4. Requires Mg(2+) as cofactor. Mn(2+) serves as cofactor.

The enzyme catalyses hydrogencarbonate + L-glutamine + 2 ATP + H2O = carbamoyl phosphate + L-glutamate + 2 ADP + phosphate + 2 H(+). It catalyses the reaction hydrogencarbonate + NH4(+) + 2 ATP = carbamoyl phosphate + 2 ADP + phosphate + 2 H(+). It functions in the pathway amino-acid biosynthesis; L-arginine biosynthesis; carbamoyl phosphate from bicarbonate: step 1/1. The protein operates within pyrimidine metabolism; UMP biosynthesis via de novo pathway; (S)-dihydroorotate from bicarbonate: step 1/3. Functionally, large subunit of the glutamine-dependent carbamoyl phosphate synthetase (CPSase). CPSase catalyzes the formation of carbamoyl phosphate from the ammonia moiety of glutamine, carbonate, and phosphate donated by ATP, constituting the first step of 2 biosynthetic pathways, one leading to arginine and/or urea and the other to pyrimidine nucleotides. The large subunit (synthetase) binds the substrates ammonia (free or transferred from glutamine from the small subunit), hydrogencarbonate and ATP and carries out an ATP-coupled ligase reaction, activating hydrogencarbonate by forming carboxy phosphate which reacts with ammonia to form carbamoyl phosphate. The protein is Carbamoyl phosphate synthase large chain of Vibrio vulnificus (strain CMCP6).